The following is a 202-amino-acid chain: N-(5'-phosphoribosyl)anthranilate isomerase (202 aa).

The protein belongs to the TrpF family.

It catalyses the reaction N-(5-phospho-beta-D-ribosyl)anthranilate = 1-(2-carboxyphenylamino)-1-deoxy-D-ribulose 5-phosphate. Its pathway is amino-acid biosynthesis; L-tryptophan biosynthesis; L-tryptophan from chorismate: step 3/5. The chain is N-(5'-phosphoribosyl)anthranilate isomerase from Listeria monocytogenes serotype 4a (strain HCC23).